The primary structure comprises 197 residues: Fe/S biogenesis protein NfuA (197 aa).

Cysteine 155 and cysteine 158 together coordinate [4Fe-4S] cluster.

This sequence belongs to the NfuA family. Homodimer. [4Fe-4S] cluster is required as a cofactor.

Functionally, involved in iron-sulfur cluster biogenesis. Binds a 4Fe-4S cluster, can transfer this cluster to apoproteins, and thereby intervenes in the maturation of Fe/S proteins. Could also act as a scaffold/chaperone for damaged Fe/S proteins. In Pseudomonas savastanoi pv. phaseolicola (strain 1448A / Race 6) (Pseudomonas syringae pv. phaseolicola (strain 1448A / Race 6)), this protein is Fe/S biogenesis protein NfuA.